The primary structure comprises 428 residues: Glutamate-1-semialdehyde 2,1-aminomutase (428 aa).

At Lys265 the chain carries N6-(pyridoxal phosphate)lysine.

Belongs to the class-III pyridoxal-phosphate-dependent aminotransferase family. HemL subfamily. As to quaternary structure, homodimer. Pyridoxal 5'-phosphate is required as a cofactor.

Its subcellular location is the cytoplasm. The enzyme catalyses (S)-4-amino-5-oxopentanoate = 5-aminolevulinate. It functions in the pathway porphyrin-containing compound metabolism; protoporphyrin-IX biosynthesis; 5-aminolevulinate from L-glutamyl-tRNA(Glu): step 2/2. The protein is Glutamate-1-semialdehyde 2,1-aminomutase of Hamiltonella defensa subsp. Acyrthosiphon pisum (strain 5AT).